Consider the following 285-residue polypeptide: 4-diphosphocytidyl-2-C-methyl-D-erythritol kinase (285 aa).

Residue lysine 12 is part of the active site. 95 to 105 contributes to the ATP binding site; sequence PVGAGLAGGST. Aspartate 137 is an active-site residue.

This sequence belongs to the GHMP kinase family. IspE subfamily.

It carries out the reaction 4-CDP-2-C-methyl-D-erythritol + ATP = 4-CDP-2-C-methyl-D-erythritol 2-phosphate + ADP + H(+). The protein operates within isoprenoid biosynthesis; isopentenyl diphosphate biosynthesis via DXP pathway; isopentenyl diphosphate from 1-deoxy-D-xylulose 5-phosphate: step 3/6. Its function is as follows. Catalyzes the phosphorylation of the position 2 hydroxy group of 4-diphosphocytidyl-2C-methyl-D-erythritol. The sequence is that of 4-diphosphocytidyl-2-C-methyl-D-erythritol kinase from Syntrophomonas wolfei subsp. wolfei (strain DSM 2245B / Goettingen).